Reading from the N-terminus, the 133-residue chain is Small ribosomal subunit protein uS11 (133 aa).

Belongs to the universal ribosomal protein uS11 family. Part of the 30S ribosomal subunit.

Functionally, located on the platform of the 30S subunit. The protein is Small ribosomal subunit protein uS11 of Hyperthermus butylicus (strain DSM 5456 / JCM 9403 / PLM1-5).